Reading from the N-terminus, the 331-residue chain is Phenol 2-monooxygenase, oxygenase component DmpL (331 aa).

The protein belongs to the TmoE/XamoE family. The multicomponent enzyme phenol hydroxylase is formed by DmpL (P1 component), DmpM (P2 component), DmpN (P3 component), DmpO (P4 component) and DmpP (P5 component). The oxygenase component is a dimer composed of three subunits, DmpL, DmpN and DmpO (DmpLNO). DmpL interacts with the auxiliary protein DmpK (P0 component).

The catalysed reaction is phenol + NADH + O2 + H(+) = catechol + NAD(+) + H2O. It participates in aromatic compound metabolism; phenol degradation. Requires DmpM for efficient turnover. The activity of DmpLNO oxygenase is inhibited by dithiothreitol (DTT) by a mechanism apparently involving H(2)O(2) generation. Part of a multicomponent enzyme which catalyzes the degradation of phenol and some of its methylated derivatives. DmpL, DmpN and DmpO form the oxygenase component of the complex. Required for growth on phenol and for in vitro phenol hydroxylase activity. The polypeptide is Phenol 2-monooxygenase, oxygenase component DmpL (Pseudomonas sp. (strain CF600)).